The primary structure comprises 139 residues: Transcription antitermination protein NusB (139 aa).

Belongs to the NusB family.

In terms of biological role, involved in transcription antitermination. Required for transcription of ribosomal RNA (rRNA) genes. Binds specifically to the boxA antiterminator sequence of the ribosomal RNA (rrn) operons. This chain is Transcription antitermination protein NusB, found in Salmonella agona (strain SL483).